Reading from the N-terminus, the 280-residue chain is Cobalt import ATP-binding protein CbiO (280 aa).

The region spanning 2–236 (IEVRDLRFHY…GDWLRQQGLG (235 aa)) is the ABC transporter domain. 36 to 43 (GANGCGKT) serves as a coordination point for ATP.

The protein belongs to the ABC transporter superfamily. Cobalt importer (TC 3.A.1.18.1) family. In terms of assembly, forms an energy-coupling factor (ECF) transporter complex composed of an ATP-binding protein (A component, CbiO), a transmembrane protein (T component, CbiQ) and 2 possible substrate-capture proteins (S components, CbiM and CbiN) of unknown stoichimetry.

It localises to the cell inner membrane. It participates in cofactor biosynthesis; adenosylcobalamin biosynthesis. Functionally, part of the energy-coupling factor (ECF) transporter complex CbiMNOQ involved in cobalt import. Presumably responsible for energy coupling to the transport system. This chain is Cobalt import ATP-binding protein CbiO, found in Syntrophus aciditrophicus (strain SB).